A 98-amino-acid chain; its full sequence is MEFYEAKAYSNLLKKKKTGNLFKNDPTITTTTTQINKEEIISDPVNIIISEQNKKSKKNILHFFKKFKNNNNLDNKIIIIEKDQNAQKNYEEDIPSLI.

This is an uncharacterized protein from Dictyostelium discoideum (Social amoeba).